The primary structure comprises 248 residues: 2-acetamido-2-deoxy-D-galactose-binding seed lectin 2 (248 aa).

Asn119 carries an N-linked (GlcNAc...) asparagine; partial glycan. 2 residues coordinate Mn(2+): Glu128 and Asp130. Residues Asp130, Tyr132, Asn134, and Asp138 each contribute to the Ca(2+) site. Residues Asp138 and His144 each contribute to the Mn(2+) site.

Belongs to the leguminous lectin family.

The chain is 2-acetamido-2-deoxy-D-galactose-binding seed lectin 2 from Cytisus scoparius (Scotch broom).